Reading from the N-terminus, the 541-residue chain is T-complex protein 1 subunit epsilon (541 aa).

A2 is subject to N-acetylalanine. A Glycyl lysine isopeptide (Lys-Gly) (interchain with G-Cter in SUMO2) cross-link involves residue K20. At S26 the chain carries Phosphoserine. Position 53 (G53) interacts with ADP. G53 lines the ATP pocket. A Mg(2+)-binding site is contributed by D104. Positions 105, 106, 107, and 175 each coordinate ADP. ATP-binding residues include T106 and T107. Glycyl lysine isopeptide (Lys-Gly) (interchain with G-Cter in SUMO2) cross-links involve residues K210, K214, K265, K275, and K279. S346 carries the phosphoserine modification. Residue K392 forms a Glycyl lysine isopeptide (Lys-Gly) (interchain with G-Cter in SUMO2) linkage. G422, D492, E508, and K513 together coordinate ADP. Position 422 (G422) interacts with ATP. The residue at position 539 (S539) is a Phosphoserine.

This sequence belongs to the TCP-1 chaperonin family. In terms of assembly, component of the chaperonin-containing T-complex (TRiC), a hexadecamer composed of two identical back-to-back stacked rings enclosing a protein folding chamber. Each ring is made up of eight different subunits: TCP1/CCT1, CCT2, CCT3, CCT4, CCT5, CCT6A/CCT6, CCT7, CCT8. Interacts with PACRG. Interacts with DNAAF4. Interacts with DLEC1. Interacts with SPMAP2. Post-translationally, ubiquitinated by the DCX(DCAF12) complex specifically recognizes the diglutamate (Glu-Glu) at the C-terminus, leading to its degradation.

It localises to the cytoplasm. Its subcellular location is the cytoskeleton. It is found in the microtubule organizing center. The protein localises to the centrosome. It carries out the reaction ATP + H2O = ADP + phosphate + H(+). Its function is as follows. Component of the chaperonin-containing T-complex (TRiC), a molecular chaperone complex that assists the folding of actin, tubulin and other proteins upon ATP hydrolysis. The TRiC complex mediates the folding of WRAP53/TCAB1, thereby regulating telomere maintenance. As part of the TRiC complex may play a role in the assembly of BBSome, a complex involved in ciliogenesis regulating transports vesicles to the cilia. This chain is T-complex protein 1 subunit epsilon (CCT5), found in Homo sapiens (Human).